The following is a 388-amino-acid chain: Succinate--CoA ligase [ADP-forming] subunit beta (388 aa).

Positions 9–244 (KQLFARYGMP…PSQEDAREAH (236 aa)) constitute an ATP-grasp domain. ATP-binding positions include Lys-46, 53–55 (GRG), Glu-99, Thr-102, and Glu-107. Mg(2+) is bound by residues Asn-199 and Asp-213. Residues Asn-264 and 321–323 (GIV) each bind substrate.

The protein belongs to the succinate/malate CoA ligase beta subunit family. In terms of assembly, heterotetramer of two alpha and two beta subunits. Requires Mg(2+) as cofactor.

The enzyme catalyses succinate + ATP + CoA = succinyl-CoA + ADP + phosphate. The catalysed reaction is GTP + succinate + CoA = succinyl-CoA + GDP + phosphate. It functions in the pathway carbohydrate metabolism; tricarboxylic acid cycle; succinate from succinyl-CoA (ligase route): step 1/1. Its function is as follows. Succinyl-CoA synthetase functions in the citric acid cycle (TCA), coupling the hydrolysis of succinyl-CoA to the synthesis of either ATP or GTP and thus represents the only step of substrate-level phosphorylation in the TCA. The beta subunit provides nucleotide specificity of the enzyme and binds the substrate succinate, while the binding sites for coenzyme A and phosphate are found in the alpha subunit. This Yersinia pseudotuberculosis serotype O:1b (strain IP 31758) protein is Succinate--CoA ligase [ADP-forming] subunit beta.